A 169-amino-acid polypeptide reads, in one-letter code: Cell division inhibitor SulA (169 aa).

The tract at residues 106–112 is ftsZ binding; it reads ALRTGNY. Positions 162–169 are lon protease binding; the sequence is KIHSNLYH.

Belongs to the SulA family. In terms of assembly, interacts with FtsZ. In terms of processing, is rapidly cleaved and degraded by the Lon protease once DNA damage is repaired.

In terms of biological role, component of the SOS system and an inhibitor of cell division. Accumulation of SulA causes rapid cessation of cell division and the appearance of long, non-septate filaments. In the presence of GTP, binds a polymerization-competent form of FtsZ in a 1:1 ratio, thus inhibiting FtsZ polymerization and therefore preventing it from participating in the assembly of the Z ring. This mechanism prevents the premature segregation of damaged DNA to daughter cells during cell division. This is Cell division inhibitor SulA from Escherichia coli O81 (strain ED1a).